The sequence spans 307 residues: Ribosomal RNA small subunit methyltransferase A (307 aa).

S-adenosyl-L-methionine is bound by residues asparagine 35, valine 37, glycine 62, glutamate 83, aspartate 113, and asparagine 136.

It belongs to the class I-like SAM-binding methyltransferase superfamily. rRNA adenine N(6)-methyltransferase family. RsmA subfamily.

The protein resides in the cytoplasm. It catalyses the reaction adenosine(1518)/adenosine(1519) in 16S rRNA + 4 S-adenosyl-L-methionine = N(6)-dimethyladenosine(1518)/N(6)-dimethyladenosine(1519) in 16S rRNA + 4 S-adenosyl-L-homocysteine + 4 H(+). Its function is as follows. Specifically dimethylates two adjacent adenosines (A1518 and A1519) in the loop of a conserved hairpin near the 3'-end of 16S rRNA in the 30S particle. May play a critical role in biogenesis of 30S subunits. This Bifidobacterium longum (strain DJO10A) protein is Ribosomal RNA small subunit methyltransferase A.